Here is a 111-residue protein sequence, read N- to C-terminus: HTH-type transcriptional regulator SinR (111 aa).

Residues 6 to 61 (IKQYRKEKGYSLSELAEKAGVAKSYLSSIERNLQTNPSIQFLEKVSAVLDVSVHTL) enclose the HTH cro/C1-type domain. Residues 17 to 36 (LSELAEKAGVAKSYLSSIER) constitute a DNA-binding region (H-T-H motif). Residues 65–103 (KDETEYDGQLDSEWENLVRDAMASGVSKKQFREFLDYQK) form the Sin domain.

Homotetramer. Also associates with SinI.

In terms of biological role, affects autolysin level and flagellation. This is HTH-type transcriptional regulator SinR (sinR) from Bacillus licheniformis.